The primary structure comprises 1148 residues: Pyruvate carboxylase (1148 aa).

The region spanning 1-457 (MSQQSIQKVL…DTSFIDTTPE (457 aa)) is the Biotin carboxylation domain. ATP contacts are provided by lysine 121, glutamate 205, and histidine 240. The ATP-grasp domain occupies 125-321 (REQAEKAGIP…IVQTQILVAQ (197 aa)). Lysine 242 is an active-site residue. Positions 534-802 (VLLTDTTFRD…RPEMNVQGVE (269 aa)) constitute a Pyruvate carboxyltransferase domain. Residues 542-546 (RDAHQ) and arginine 615 contribute to the substrate site. Aspartate 543 lines the a divalent metal cation pocket. Lysine 712, histidine 741, and histidine 743 together coordinate a divalent metal cation. Position 712 is an N6-carboxylysine (lysine 712). Threonine 876 contributes to the substrate binding site. One can recognise a Biotinyl-binding domain in the interval 1071 to 1146 (KADRTNPSHI…QTGDLLLEIE (76 aa)). At lysine 1112 the chain carries N6-biotinyllysine.

In terms of assembly, homotetramer. At very low potassium concentrations, when intracellular levels of c-di-AMP are low, interacts with apo-DarB. c-di-AMP inhibits the binding of DarB to PYC. Does not bind directly c-di-AMP. Requires biotin as cofactor.

The catalysed reaction is hydrogencarbonate + pyruvate + ATP = oxaloacetate + ADP + phosphate + H(+). Its activity is regulated as follows. Activated by the cyclic di-AMP (c-di-AMP) receptor DarB in the absence of c-di-AMP. Allosterically activated by acetyl-CoA. Inhibited by the biotin-complexing protein avidin. Its function is as follows. Catalyzes a 2-step reaction, involving the ATP-dependent carboxylation of the covalently attached biotin in the first step and the transfer of the carboxyl group to pyruvate in the second, leading to oxaloacetate production. Fulfills an anaplerotic function in B.subtilis as it is necessary for growth on glucose, but is not required for sporulation. The sequence is that of Pyruvate carboxylase (pyc) from Bacillus subtilis (strain 168).